The primary structure comprises 330 residues: Nodulation protein D 2 (330 aa).

The 58-residue stretch at 6–63 folds into the HTH lysR-type domain; the sequence is LDLNLLVALDALITERNLSSAARKINLSQPAMSAAVARLRKHFRDELFGMRGRELVLS. Residues 23 to 42 constitute a DNA-binding region (H-T-H motif); it reads LSSAARKINLSQPAMSAAVA. The interval 308 to 330 is disordered; sequence RVTSSPEDAEPPGHFVRSVSPLP.

This sequence belongs to the LysR transcriptional regulatory family.

Its function is as follows. NodD regulates the expression of the nodABCFE genes which encode other nodulation proteins. NodD is also a negative regulator of its own expression. Binds flavonoids as inducers. The protein is Nodulation protein D 2 (nodD2) of Bradyrhizobium diazoefficiens (strain JCM 10833 / BCRC 13528 / IAM 13628 / NBRC 14792 / USDA 110).